A 911-amino-acid polypeptide reads, in one-letter code: SH3 and PX domain-containing protein 2B (911 aa).

The region spanning 5–129 (RSIVEVKVLD…QFFETRPEDL (125 aa)) is the PX domain. Y25 is subject to Phosphotyrosine. 2 consecutive SH3 domains span residues 152–211 (MVLE…GQDG) and 221–280 (EEEE…KNSG). A disordered region spans residues 275 to 366 (LKKNSGEPLP…GLNLPKPPIP (92 aa)). Residues S279 and S291 each carry the phosphoserine modification. Over residues 282–292 (PLPPKPGPGSP) the composition is skewed to pro residues. A compositionally biased stretch (basic and acidic residues) spans 311–337 (GREKELLSSQRDGRFEGRPVPDGDAKQ). The segment covering 338–347 (RSPKMRQRPP) has biased composition (basic residues). The SH3 3 domain maps to 368–427 (QVEEEYYTIAEFQTTIPDGISFQAGLKVEVIEKNLSGWWYIQIEDKEGWAPATFIDKYKK). Residues 458-834 (NTGSEATGPS…GPWGTGKIGE (377 aa)) are disordered. 5 stretches are compositionally biased toward basic and acidic residues: residues 486–499 (KDWKGSKDVLRKAS), 517–548 (EEKPSLPPRKESIIKSEGELLERERERQRTEQ), 571–586 (PARDSRRPEPKPDKSR), 598–609 (CGHKVLAKEVKK), and 618–628 (SKTDLPEEKPD). Phosphoserine occurs at positions 499 and 528. 2 stretches are compositionally biased toward pro residues: residues 643–653 (RPKPAPSPKTE) and 756–766 (VVPPRRPPPPK). A compositionally biased stretch (gly residues) spans 822-831 (GSLGPWGTGK). Phosphoserine is present on S843. Residues 850–911 (LKDSLYVAVA…IPSNYLRKKP (62 aa)) form the SH3 4 domain.

This sequence belongs to the SH3PXD2 family. As to quaternary structure, interacts with ADAM15. Interacts with NOXO1. Interacts (via SH3 domains) with NOXA1; the interaction is direct. Interacts with FASLG. Phosphorylated in SRC-transformed cells. As to expression, expressed in fibroblasts.

The protein resides in the cytoplasm. It localises to the cell projection. The protein localises to the podosome. Adapter protein involved in invadopodia and podosome formation and extracellular matrix degradation. Binds matrix metalloproteinases (ADAMs), NADPH oxidases (NOXs) and phosphoinositides. Acts as an organizer protein that allows NOX1- or NOX3-dependent reactive oxygen species (ROS) generation and ROS localization. Plays a role in mitotic clonal expansion during the immediate early stage of adipocyte differentiation. In Homo sapiens (Human), this protein is SH3 and PX domain-containing protein 2B (SH3PXD2B).